The primary structure comprises 1196 residues: MAGHDVKYGKHRTRRSFSRIKEVIGLPNLIEVQTLSYKNFLDEGLANVFKEMFPIDNFAGTMELEFVGYEMKTPKYTVEEARAHDANYSAPIYVTFRLVNKETGELKTQEVFFGDFPLMTEMGTFINNGSERLIVSQLVRSPGSYFHLKADKNGLESFGHTTIPNRGAWFELDTDAKGIGYVRIDRTRKLTFTTMLRALGFGSDEEILELLGETQLLTDTIAKDVHKNPADTRVEEALKDIYDRLRPGEPKTADSSRGLLVARFFDPKRYDFAPVGRYKFNKKLALKNRLLGLTLAEPIVDPETGEILVNTDTLVTRDVLDLIEPLLDNGLGNFVVEPSDDAVIPEPITLQSIKVYSPKDPERVVTLLSNGNPDAECRVLTPADVISNISYWLGLAEGIGKVDDIDHLGNRRIRSVGELLQNQVRIGLSRMERVIRERMSSSENENITPQGLINIRPVTASIKEFFGSSQLSQFMDQHNPLSELSHKRRFSALGPGGISRDRASYEVRDVHYTHYGRMCPIETPEGPNIGLINNLSSYAKVNEYGFIMSPYRRVDRVNGVVTDEVEYLTADEEDNYTVAQANSPLTEDSRFANETVMARHTGNNIEVEASTADYMDVSPKQVIAVAAACIPFLENDDSNRALMGANMQRQAVPLIDPHAPWIGTGMEHQTARDSGAALIAKHAGVVEYVDGNEIRVRRTSGELDIYNITKYRRSNSGTSYNQRPLARLGEKVEKGDIIADGPSMENGEMALGQNPLVAYMTWEGYNFEDAVIMSERLIKDDVYTSIAIEEYESETRDTKLGPEEITREIPNVGDEALKNLDESGIIRIGAEVKDGDLLVGKVTPKGETDPTPEERLLRAIFGEKAREVRDTSLRVPHGGGGIVHDVRVFTRENGDELPSGVNKLVRVFIAQKRKIHVGDKMAGRHGNKGVVSNIVPMEDMPYLPDGTPIDIMLNPLGVPSRMNIGQVMELHLGMAARTLGIHIATPVFDGASDEDIWDTVKEAGMADDAKTVLYDGRTGEPFDNRISVGVMYMIKLHHMVDDKLHARSVGPYSLVTQQPLGGKAQFGGQRFGEMEVWALEAYGAANVLQEILTYKSDDVIGRTRAYEAIVKGERIPKPGLPESFRVLVKELQSLGLDMKVLDADRNVLDLRELDEDEVMTRPDNTEITPEMLEAQEAIVAQAEAEEEALINADTEK.

Belongs to the RNA polymerase beta chain family. In terms of assembly, the RNAP catalytic core consists of 2 alpha, 1 beta, 1 beta' and 1 omega subunit. When a sigma factor is associated with the core the holoenzyme is formed, which can initiate transcription.

The catalysed reaction is RNA(n) + a ribonucleoside 5'-triphosphate = RNA(n+1) + diphosphate. Its function is as follows. DNA-dependent RNA polymerase catalyzes the transcription of DNA into RNA using the four ribonucleoside triphosphates as substrates. The chain is DNA-directed RNA polymerase subunit beta from Lactococcus lactis subsp. lactis (strain IL1403) (Streptococcus lactis).